A 428-amino-acid chain; its full sequence is Autophagy-related protein 14 (428 aa).

A coiled-coil region spans residues 82-143 (QEAIDRTAEI…RKKQLDKVKD (62 aa)).

This sequence belongs to the ATG14 family. As to quaternary structure, component of the autophagy-specific VPS34 PI3-kinase complex I.

The protein localises to the preautophagosomal structure membrane. The protein resides in the vacuole membrane. Its function is as follows. Required for cytoplasm to vacuole transport (Cvt) and autophagy as a part of the autophagy-specific VPS34 PI3-kinase complex I. This complex is essential to recruit the ATG8-phosphatidylinositol conjugate and the ATG12-ATG5 conjugate to the pre-autophagosomal structure. ATG14 mediates the specific binding of the VPS34 PI3-kinase complex I to the preautophagosomal structure (PAS). Plays a crucial role in hyphal development, conidiogenesis and pathogenicity. Also required for glycogen mobilization, quantity of lipid bodies, and the turgor pressure of appressoria. The protein is Autophagy-related protein 14 of Pyricularia oryzae (strain 70-15 / ATCC MYA-4617 / FGSC 8958) (Rice blast fungus).